Here is an 89-residue protein sequence, read N- to C-terminus: Small ribosomal subunit protein uS15 (89 aa).

This sequence belongs to the universal ribosomal protein uS15 family. Part of the 30S ribosomal subunit. Forms a bridge to the 50S subunit in the 70S ribosome, contacting the 23S rRNA.

One of the primary rRNA binding proteins, it binds directly to 16S rRNA where it helps nucleate assembly of the platform of the 30S subunit by binding and bridging several RNA helices of the 16S rRNA. Functionally, forms an intersubunit bridge (bridge B4) with the 23S rRNA of the 50S subunit in the ribosome. This Solibacter usitatus (strain Ellin6076) protein is Small ribosomal subunit protein uS15.